The sequence spans 108 residues: Nucleoid-associated protein BTH_I2220 (108 aa).

The protein belongs to the YbaB/EbfC family. As to quaternary structure, homodimer.

Its subcellular location is the cytoplasm. It localises to the nucleoid. Its function is as follows. Binds to DNA and alters its conformation. May be involved in regulation of gene expression, nucleoid organization and DNA protection. The chain is Nucleoid-associated protein BTH_I2220 from Burkholderia thailandensis (strain ATCC 700388 / DSM 13276 / CCUG 48851 / CIP 106301 / E264).